The following is a 315-amino-acid chain: Protoheme IX farnesyltransferase (315 aa).

9 helical membrane-spanning segments follow: residues 32–52 (VMSL…GHMN), 53–73 (PVLA…SGAL), 93–113 (IPAG…LSAF), 120–140 (LMVN…YAVI), 153–173 (IVIG…AATG), 180–200 (LVLF…LSLF), 226–246 (ALFY…MGFA), 249–269 (FYGV…WRLW), and 295–315 (IFAV…FGVF).

It belongs to the UbiA prenyltransferase family. Protoheme IX farnesyltransferase subfamily.

Its subcellular location is the cell inner membrane. It carries out the reaction heme b + (2E,6E)-farnesyl diphosphate + H2O = Fe(II)-heme o + diphosphate. It functions in the pathway porphyrin-containing compound metabolism; heme O biosynthesis; heme O from protoheme: step 1/1. In terms of biological role, converts heme B (protoheme IX) to heme O by substitution of the vinyl group on carbon 2 of heme B porphyrin ring with a hydroxyethyl farnesyl side group. The sequence is that of Protoheme IX farnesyltransferase from Brucella suis (strain ATCC 23445 / NCTC 10510).